The sequence spans 790 residues: Tumor necrosis factor alpha-induced protein 3 (790 aa).

Ala-2 is modified (N-acetylalanine). A TRAF-binding region spans residues 58–300 (PQFREIIHKA…LTDPENEMKE (243 aa)). Residues 92–263 (LVALKTNGDG…SHHFVPLVTL (172 aa)) form the OTU domain. The active site involves Asp-100. Residue Cys-103 is the Nucleophile of the active site. Interaction with ubiquitin stretches follow at residues 157 to 159 (LCY), 190 to 192 (SLE), and 224 to 227 (FAPL). The active-site Proton acceptor is the His-256. The segment at 369–775 (AQNPMESSLP…ACDHFGNAKC (407 aa)) is interaction with TNIP1. The segment at 381–416 (SLMDVKCETPNCPFFMSVNTQPLCHECSERRQKNQN) adopts an A20-type 1 zinc-finger fold. Residues 386-453 (KCETPNCPFF…EPLAWNPEEP (68 aa)) are interaction with RIPK1. Zn(2+)-binding residues include Cys-387, Cys-392, Cys-404, and Cys-407. The disordered stretch occupies residues 415–467 (QNKLPKLNSKPGPEGLPGMALGASRGEAYEPLAWNPEEPTGGPHSAPPTAPSP). Ser-459 carries the post-translational modification Phosphoserine. A20-type zinc fingers lie at residues 472–507 (ETTA…LHAS) and 515–548 (HLDP…AEAS). Positions 478, 483, 495, 498, 521, 524, 536, and 539 each coordinate Zn(2+). Residues 550-580 (SLSTSLPPSCHQRSKSDPSQLVRSPSPHSCH) form a disordered region. Residues 566–576 (DPSQLVRSPSP) show a composition bias toward polar residues. Position 575 is a phosphoserine (Ser-575). The A20-type 4 zinc finger occupies 601 to 636 (RTGTSKCRKAGCMYFGTPENKGFCTLCFIEYRENKH). The tract at residues 605 to 655 (SKCRKAGCMYFGTPENKGFCTLCFIEYRENKHLVAASGKASPTASRFQNTI) is required for proteasomal degradation of UBE2N and UBE2D3, TRAF6 deubiquitination, and TAX1BP1 interaction with UBE2N. Residues 606-790 (KCRKAGCMYF…ECFQFKQMYG (185 aa)) are sufficient for inhibitory activity of TNF-induced NF-kappa-B activity. 4 residues coordinate Zn(2+): Cys-607, Cys-612, Cys-624, and Cys-627. Ser-645 is modified (phosphoserine). The A20-type 5 zinc finger occupies 651–686 (FQNTIPCLGRECGTLGSTMFEGYCQKCFIEAQNQRF). Zn(2+) contacts are provided by Cys-657, Cys-662, Cys-674, and Cys-677. Over residues 689-705 (AKRTEEQLRSSQRRDVP) the composition is skewed to basic and acidic residues. The segment at 689-712 (AKRTEEQLRSSQRRDVPRTTQSTS) is disordered. Residues 697 to 790 (RSSQRRDVPR…ECFQFKQMYG (94 aa)) form a required for lysosomal localization and for TRAF2 lysosomal degradation region. A20-type zinc fingers lie at residues 710-745 (STSR…RMGP) and 756-790 (DPPK…QMYG). Residues Cys-716, Cys-721, Cys-733, Cys-736, Cys-762, Cys-767, Cys-779, and Cys-782 each contribute to the Zn(2+) site.

The protein belongs to the peptidase C64 family. In terms of assembly, homodimer. Interacts with TNIP1, TAX1BP1 and TRAF2. Interacts with RNF11, ITCH and TAX1BP1 only after TNF stimulation; these interaction are transient and they are lost after 1 hour of stimulation with TNF. Interacts with YWHAZ and YWHAH. Interacts with IKBKG; the interaction is induced by TNF stimulation and by polyubiquitin. Interacts with RIPK1. Interacts with UBE2N; the interaction requires TAX1BP1. Interacts with TRAF6. Proteolytically cleaved by MALT1 upon TCR stimulation; disrupts NF-kappa-B inhibitory function and results in increased IL-2 production. It is proposed that only a fraction of TNFAIP3 colocalized with TCR and CBM complex is cleaved, leaving the main TNFAIP3 pool intact.

It is found in the cytoplasm. The protein localises to the nucleus. The protein resides in the lysosome. It catalyses the reaction Thiol-dependent hydrolysis of ester, thioester, amide, peptide and isopeptide bonds formed by the C-terminal Gly of ubiquitin (a 76-residue protein attached to proteins as an intracellular targeting signal).. In terms of biological role, ubiquitin-editing enzyme that contains both ubiquitin ligase and deubiquitinase activities. Involved in immune and inflammatory responses signaled by cytokines, such as TNF-alpha and IL-1 beta, or pathogens via Toll-like receptors (TLRs) through terminating NF-kappa-B activity. Essential component of a ubiquitin-editing protein complex, comprising also RNF11, ITCH and TAX1BP1, that ensures the transient nature of inflammatory signaling pathways. In cooperation with TAX1BP1 promotes disassembly of E2-E3 ubiquitin protein ligase complexes in IL-1R and TNFR-1 pathways; affected are at least E3 ligases TRAF6, TRAF2 and BIRC2, and E2 ubiquitin-conjugating enzymes UBE2N and UBE2D3. In cooperation with TAX1BP1 promotes ubiquitination of UBE2N and proteasomal degradation of UBE2N and UBE2D3. Upon TNF stimulation, deubiquitinates 'Lys-63'-polyubiquitin chains on RIPK1 and catalyzes the formation of 'Lys-48'-polyubiquitin chains. This leads to RIPK1 proteasomal degradation and consequently termination of the TNF- or LPS-mediated activation of NF-kappa-B. Deubiquitinates TRAF6 probably acting on 'Lys-63'-linked polyubiquitin. Upon T-cell receptor (TCR)-mediated T-cell activation, deubiquitinates 'Lys-63'-polyubiquitin chains on MALT1 thereby mediating disassociation of the CBM (CARD11:BCL10:MALT1) and IKK complexes and preventing sustained IKK activation. Deubiquitinates NEMO/IKBKG; the function is facilitated by TNIP1 and leads to inhibition of NF-kappa-B activation. Upon stimulation by bacterial peptidoglycans, probably deubiquitinates RIPK2. Can also inhibit I-kappa-B-kinase (IKK) through a non-catalytic mechanism which involves polyubiquitin; polyubiquitin promotes association with IKBKG and prevents IKK MAP3K7-mediated phosphorylation. Targets TRAF2 for lysosomal degradation. In vitro able to deubiquitinate 'Lys-11'-, 'Lys-48'- and 'Lys-63' polyubiquitin chains. Inhibitor of programmed cell death. Has a role in the function of the lymphoid system. Required for LPS-induced production of pro-inflammatory cytokines and IFN beta in LPS-tolerized macrophages. The protein is Tumor necrosis factor alpha-induced protein 3 (TNFAIP3) of Macaca fascicularis (Crab-eating macaque).